We begin with the raw amino-acid sequence, 139 residues long: Protein FAM216B (139 aa).

The protein belongs to the FAM216 family.

The protein is Protein FAM216B (FAM216B) of Homo sapiens (Human).